A 688-amino-acid chain; its full sequence is Collagen alpha-2(IX) chain (688 aa).

The N-terminal stretch at 1 to 22 (MTAVPAPRSLFVLLQVLWLALA) is a signal peptide. Residues 26–162 (GPPGEPGPPG…PGKPGRPGTI (137 aa)) are triple-helical region 4 (COL4). The segment at 26 to 171 (GPPGEPGPPG…IQGLEGSADF (146 aa)) is disordered. Pro residues-rich tracts occupy residues 28–42 (PGEPGPPGPPGPPGV) and 105–126 (LPGPPGLPGPGFAGPPGPPGPV). Residues 128 to 137 (LPGEIGTPGP) are compositionally biased toward low complexity. Positions 138–156 (KGDPGPEGPSGPPGPPGKP) are enriched in pro residues. A 4-hydroxyproline modification is found at Pro159. Residues 163–179 (QGLEGSADFLCPTNCPA) are nonhelical region 4 (NC4). The O-linked (Xyl...) (glycosaminoglycan) serine glycan is linked to Ser168. The triple-helical region 3 (COL3) stretch occupies residues 180-518 (GVKGPQGLQG…PGRQGVVGRA (339 aa)). Lys182 bears the 5-hydroxylysine mark. Lys182 carries O-linked (Gal...) hydroxylysine glycosylation. A disordered region spans residues 183 to 517 (GPQGLQGVKG…QPGRQGVVGR (335 aa)). 2 stretches are compositionally biased toward low complexity: residues 289–314 (PQGITGPKGITGPPGIDGKDGTPGIP) and 392–412 (RGPVGQPGPQGRQGPKGEQGP). The segment covering 435–444 (GPRGGVGDPG) has biased composition (gly residues). The span at 502 to 517 (DRGVPGQPGRQGVVGR) shows a compositional bias: low complexity. A nonhelical region 3 (NC3) region spans residues 519–548 (ASDQHIVDVVLKMIQEQLAEVAVSAKREAL). The triple-helical region 2 (COL2) stretch occupies residues 549-631 (GAAGMVGLPG…PGLPGRPGQA (83 aa)). The disordered stretch occupies residues 553–664 (MVGLPGPPGP…GPVGLPGFCE (112 aa)). Positions 598–610 (KRGEKGDRGEMGH) are enriched in basic and acidic residues. A nonhelical region 2 (NC2) region spans residues 632-633 (IN). The segment at 634-663 (GKDGDRGSPGAPGEAGRPGRPGPVGLPGFC) is triple-helical region 1 (COL1). The segment at 664 to 688 (EPAACLGASAYTSARLTEPGSIKGP) is nonhelical region 1 (NC1).

It belongs to the fibril-associated collagens with interrupted helices (FACIT) family. In terms of assembly, heterotrimer of an alpha 1(IX), an alpha 2(IX) and an alpha 3(IX) chain. The chains are linked to each other by interchain disulfide bonds. Trimers are also cross-linked via hydroxylysines. Post-translationally, covalently linked to the telopeptides of type II collagen by lysine-derived cross-links. Prolines at the third position of the tripeptide repeating unit (G-X-Y) are hydroxylated in some or all of the chains.

It localises to the secreted. The protein resides in the extracellular space. It is found in the extracellular matrix. Structural component of hyaline cartilage and vitreous of the eye. This Mus musculus (Mouse) protein is Collagen alpha-2(IX) chain (Col9a2).